The chain runs to 432 residues: Glutamate-1-semialdehyde 2,1-aminomutase 2 (432 aa).

Residue Lys268 is modified to N6-(pyridoxal phosphate)lysine.

This sequence belongs to the class-III pyridoxal-phosphate-dependent aminotransferase family. HemL subfamily. Homodimer. Pyridoxal 5'-phosphate serves as cofactor.

It is found in the cytoplasm. It carries out the reaction (S)-4-amino-5-oxopentanoate = 5-aminolevulinate. It participates in porphyrin-containing compound metabolism; protoporphyrin-IX biosynthesis; 5-aminolevulinate from L-glutamyl-tRNA(Glu): step 2/2. The protein is Glutamate-1-semialdehyde 2,1-aminomutase 2 of Listeria monocytogenes serotype 4b (strain F2365).